We begin with the raw amino-acid sequence, 530 residues long: MTPFSKALRCIQNSPAKQSWKTLGIMPKHGICLPLFSLHTRNSCGIGEFLDLIPMISWCRKHGFQIIQILPINDSGEDSSPYNSISSVALNPLYLSLASLPHAQSVAYANAKLRTMQQLSKLPYVHYPQVKAAKWEFLRDYYQYVVKIGALKDEDFEIFCEKEKYWLRPYTVFRSIKYHLKGAPVNNWPKAYTDIKNFTEFEKQFQDECSFFSYLQYLCFQQMSQVKAFADDNHVFLKGDLPILISKDSCDVWYYRQFFSSSGSAGAPPDIYNTEGQNWHLPIYNMHNLVQDNYTWWKARLRYAENFYSLYRLDHIVGLFRLWVWDTSGNGKFQPDDPKEYLPQGTDILTQILRASRMLPIGEDLGSVPTDVKETLVKLGICGTRIPRWERNWEGDGNFIPLGEYSPLSVTSLSTHDSDTLALWWRHAPKEAQKFAQFLGMFFTPVLAEEDQKHILTLSHKTSSIFHINLINDYLALCPDLVSNNLKYERINMPGTVSKNNWVYRIKPSVEEILTHDAFNANIADIFSKI.

This sequence belongs to the disproportionating enzyme family.

It is found in the cytoplasm. It catalyses the reaction Transfers a segment of a (1-&gt;4)-alpha-D-glucan to a new position in an acceptor, which may be glucose or a (1-&gt;4)-alpha-D-glucan.. The polypeptide is 4-alpha-glucanotransferase (malQ) (Chlamydia caviae (strain ATCC VR-813 / DSM 19441 / 03DC25 / GPIC) (Chlamydophila caviae)).